We begin with the raw amino-acid sequence, 247 residues long: Eukaryotic translation initiation factor 3 subunit J (247 aa).

Disordered regions lie at residues 1-64 and 77-101; these read MADW…KTLK and EEKR…EEQM. A compositionally biased stretch (acidic residues) spans 24–45; it reads EGEDEDDDIKESWDDDDEDEKK. Positions 43 to 108 form a coiled coil; it reads EKKEDEAKNT…EQMAEKLRRQ (66 aa).

Belongs to the eIF-3 subunit J family. As to quaternary structure, component of the eukaryotic translation initiation factor 3 (eIF-3) complex.

It localises to the cytoplasm. Component of the eukaryotic translation initiation factor 3 (eIF-3) complex, which is involved in protein synthesis of a specialized repertoire of mRNAs and, together with other initiation factors, stimulates binding of mRNA and methionyl-tRNAi to the 40S ribosome. The eIF-3 complex specifically targets and initiates translation of a subset of mRNAs involved in cell proliferation. The sequence is that of Eukaryotic translation initiation factor 3 subunit J from Nematostella vectensis (Starlet sea anemone).